The following is a 227-amino-acid chain: Protein PhlB (227 aa).

The signal sequence occupies residues 1-35 (MPEGRRLRRALAIALLALVAVTGLLMMAKEQQMGQ). 4 ANK repeats span residues 75–104 (RQVTLLQWAVLSQQPDSVQALLDLGADPAA), 108–137 (DGNSALHTAAMLQDAQYLRLLLAEGAQMNV), 142–171 (TGATPLAAAVLAGREEQLRLLLAAGADTTL), and 175–204 (LGDTPLHLAAKINRRTWRCCCCRPGPMPGR).

Cell-protective protein that neutralizes the intracellular lysis capacity of phospholipase A1 through a direct interaction with the enzyme. This is Protein PhlB (phlB) from Serratia liquefaciens.